A 1032-amino-acid chain; its full sequence is MAETNNECSIKVLCRFRPLNQAEILRGDKFIPIFQGDDSVVIGGKPYVFDRVFPPNTTQEQVYHACAMQIVKDVLAGYNGTIFAYGQTSSGKTHTMEGKLHDPQLMGIIPRIARDIFNHIYSMDENLEFHIKVSYFEIYLDKIRDLLDVTKTNLSVHEDKNRVPFVKGCTERFVSSPEEILDVIDEGKSNRHVAVTNMNEHSSRSHSIFLINIKQENMETEQKLSGKLYLVDLAGSEKVSKTGAEGAVLDEAKNINKSLSALGNVISALAEGTKSYVPYRDSKMTRILQDSLGGNCRTTMFICCSPSSYNDAETKSTLMFGQRAKTIKNTASVNLELTAEQWKKKYEKEKEKTKAQKETIAKLEAELSRWRNGENVPETERLAGEEAALGAELCEETPVNDNSSIVVRIAPEERQKYEEEIRRLYKQLDDKDDEINQQSQLIEKLKQQMLDQEELLVSTRGDNEKVQRELSHLQSENDAAKDEVKEVLQALEELAVNYDQKSQEVEEKSQQNQLLVDELSQKVATMLSLESELQRLQEVSGHQRKRIAEVLNGLMKDLSEFSVIVGNGEIKLPVEISGAIEEEFTVARLYISKIKSEVKSVVKRCRQLENLQVECHRKMEVTGRELSSCQLLISQHEAKIRSLTEYMQSVELKKRHLEESYDSLSDELAKLQAQETVHEVALKDKEPDTQDADEVKKALELQMESHREAHHRQLARLRDEINEKQKTIDELKDLNQKLQLELEKLQADYEKLKSEEHEKSTKLQELTFLYERHEQSKQDLKGLEETVARELQTLHNLRKLFVQDVTTRVKKSAEMEPEDSGGIHSQKQKISFLENNLEQLTKVHKQLVRDNADLRCELPKLEKRLRATAERVKALEGALKEAKEGAMKDKRRYQQEVDRIKEAVRYKSSGKRGHSAQIAKPVRPGHYPASSPTNPYGTRSPECISYTNSLFQNYQNLYLQATPSSTSDMYFANSCTSSGATSSGGPLASYQKANMDNGNATDINDNRSDLPCGYEAEDQAKLFPLHQETAAS.

The residue at position 2 (Ala2) is an N-acetylalanine. Residues 9 to 327 (SIKVLCRFRP…LMFGQRAKTI (319 aa)) enclose the Kinesin motor domain. ATP is bound at residue 86–93 (GQTSSGKT). Residues 174 to 315 (VSSPEEILDV…PSSYNDAETK (142 aa)) are microtubule-binding. The tract at residues 271–361 (EGTKSYVPYR…KTKAQKETIA (91 aa)) is necessary for interaction with ZFYVE27. A coiled-coil region spans residues 331–906 (ASVNLELTAE…VDRIKEAVRY (576 aa)). The tract at residues 353-1032 (TKAQKETIAK…FPLHQETAAS (680 aa)) is interaction with BICD2. Thr397 carries the post-translational modification Phosphothreonine. Disordered regions lie at residues 906 to 939 (YKSS…YGTR) and 978 to 1010 (SGAT…RSDL). Residues 907–1032 (KSSGKRGHSA…FPLHQETAAS (126 aa)) form a globular region. Residues 978-989 (SGATSSGGPLAS) show a composition bias toward low complexity. The span at 991 to 1003 (QKANMDNGNATDI) shows a compositional bias: polar residues.

This sequence belongs to the TRAFAC class myosin-kinesin ATPase superfamily. Kinesin family. Kinesin subfamily. As to quaternary structure, oligomer composed of two heavy chains and two light chains. Interacts with GRIP1. Interacts with FMR1 (via C-terminus); this interaction is increased in a mGluR-dependent manner. Interacts with ZFYVE27. Interacts with VAPA, VAPB, SURF4, RAB11A (GDP-bound form), RAB11B (GDP-bound form) and RTN3 in a ZFYVE27-dependent manner. Interacts with BORCS5. Interacts with BICD2. Interacts with DTNB. In terms of tissue distribution, distributed throughout the CNS but is highly enriched in subsets of neurons.

It localises to the cytoplasm. The protein resides in the perinuclear region. The protein localises to the cytoskeleton. Its subcellular location is the perikaryon. It catalyses the reaction ATP + H2O + a kinesin associated with a microtubule at position (n) = ADP + phosphate a kinesin associated with a microtubule at position (n+1, toward the plus end).. Its function is as follows. Microtubule-dependent motor required for slow axonal transport of neurofilament proteins (NFH, NFM and NFL). Can induce formation of neurite-like membrane protrusions in non-neuronal cells in a ZFYVE27-dependent manner. The ZFYVE27-KIF5A complex contributes to the vesicular transport of VAPA, VAPB, SURF4, RAB11A, RAB11B and RTN3 proteins in neurons. Required for anterograde axonal transportation of MAPK8IP3/JIP3 which is essential for MAPK8IP3/JIP3 function in axon elongation. This Homo sapiens (Human) protein is Kinesin heavy chain isoform 5A.